Reading from the N-terminus, the 389-residue chain is Alpha-2B adrenergic receptor (389 aa).

Residues 1–25 (AIAAVITFLILFTIFGNALVILAVL) form a helical membrane-spanning segment. Topologically, residues 26 to 36 (TSRSLRAPQNL) are cytoplasmic. The helical transmembrane segment at 37–62 (FLVSLAAADILVATLIIPFSLANELL) threads the bilayer. Over 63–72 (GYWYFRRTWC) the chain is Extracellular. A disulfide bond links Cys-72 and Cys-151. The helical transmembrane segment at 73 to 95 (EVYLALDVLFCTSSIVHLCAISL) threads the bilayer. At 96-117 (DRYWAVTRALEYNTKRTPRRIK) the chain is on the cytoplasmic side. The chain crosses the membrane as a helical span at residues 118 to 140 (CIILTVWLIAAVISLPPLIYKGD). The Extracellular portion of the chain corresponds to 141 to 156 (QGPQPRGRPQCKLNQE). Residues 157–180 (AWYILASSIGSFFAPCLIMILVYL) form a helical membrane-spanning segment. Over 181 to 363 (RIYLIAKRSH…LTREKRFTFV (183 aa)) the chain is Cytoplasmic. Disordered stretches follow at residues 194–216 (PRAK…AGAS) and 233–320 (EANG…PLQQ). A compositionally biased stretch (gly residues) spans 196 to 205 (AKGGPGGGGS). Positions 255-267 (PALPSSWPALPSS) are enriched in low complexity. Residues 280 to 302 (LEEEAEEEEEEEEEEEEGEEECE) are compositionally biased toward acidic residues. Residues 303 to 320 (PQALPASPASACSPPLQQ) show a composition bias toward low complexity. Residues 364–387 (LAVVIGVFVLCWFPFFFSYSLGAI) traverse the membrane as a helical segment. The Extracellular segment spans residues 388-389 (CP).

This sequence belongs to the G-protein coupled receptor 1 family. Adrenergic receptor subfamily. ADRA2B sub-subfamily. Interacts with RAB26. Interacts with PPP1R9B. Interacts with GGA1, GGA2 and GGA3.

The protein localises to the cell membrane. Alpha-2 adrenergic receptors mediate the catecholamine-induced inhibition of adenylate cyclase through the action of G proteins. The chain is Alpha-2B adrenergic receptor (ADRA2B) from Equus caballus (Horse).